The following is a 427-amino-acid chain: ATP-dependent RNA helicase DDX39A (427 aa).

Over residues 1–19 (MAEQDVENELLDYDEDEEP) the composition is skewed to acidic residues. The interval 1-36 (MAEQDVENELLDYDEDEEPQAPQESTPAPPKKDVKG) is disordered. The residue at position 2 (A2) is an N-acetylalanine. K31 is covalently cross-linked (Glycyl lysine isopeptide (Lys-Gly) (interchain with G-Cter in SUMO2)). K35 carries the N6-acetyllysine; alternate modification. K35 is covalently cross-linked (Glycyl lysine isopeptide (Lys-Gly) (interchain with G-Cter in SUMO2); alternate). At S37 the chain carries Phosphoserine. Positions 44–72 (SGFRDFLLKPELLRAIVDCGFEHPSEVQH) match the Q motif motif. The 174-residue stretch at 75-248 (IPQAILGMDV…RKFMQDPMEV (174 aa)) folds into the Helicase ATP-binding domain. 88–95 (AKSGMGKT) provides a ligand contact to ATP. Residues K154 and K162 each participate in a glycyl lysine isopeptide (Lys-Gly) (interchain with G-Cter in SUMO2) cross-link. T171 is modified (phosphothreonine). A DECD box motif is present at residues 195–198 (DECD). Residues K240 and K255 each participate in a glycyl lysine isopeptide (Lys-Gly) (interchain with G-Cter in SUMO2) cross-link. A Helicase C-terminal domain is found at 260–421 (GLQQYYVKLK…ELPEEIDIST (162 aa)). The residue at position 426 (S426) is a Phosphoserine.

The protein belongs to the DEAD box helicase family. DECD subfamily. As to quaternary structure, binds ALYREF/THOC4 and DDX39B/BAT1. Interacts with the apo-AREX complex component SARNP. Interacts with MX1. Interacts with MCM3AP isoform GANP. Interacts with ECD. Interacts with PHAX; this interaction stimulates PHAX RNA binding activity. SUMOylated by RANBP2; SUMOylation modification affects its ability to bind RNA.

The protein localises to the nucleus. Its subcellular location is the cytoplasm. It catalyses the reaction ATP + H2O = ADP + phosphate + H(+). Helicase that plays an essential role in mRNA export and is involved in multiple steps in RNA metabolism including alternative splicing. Regulates nuclear mRNA export to the cytoplasm through association with ECD. Also involved in spliceosomal uridine-rich small nuclear RNA (U snRNA) export by stimulating the RNA binding of adapter PHAX. Plays a role in the negative regulation of type I IFN production by increasing the nuclear retention of antiviral transcripts and thus reducing their protein expression. Independently of the interferon pathway, plays an antiviral role against alphaviruses by binding to a 5' conserved sequence element in the viral genomic RNA. The sequence is that of ATP-dependent RNA helicase DDX39A from Mus musculus (Mouse).